The chain runs to 859 residues: DNA mismatch repair protein MutS (859 aa).

Glycine 618–serine 625 provides a ligand contact to ATP. A disordered region spans residues arginine 803–proline 829. A compositionally biased stretch (low complexity) spans glutamine 808–asparagine 819.

This sequence belongs to the DNA mismatch repair MutS family.

Functionally, this protein is involved in the repair of mismatches in DNA. It is possible that it carries out the mismatch recognition step. This protein has a weak ATPase activity. The sequence is that of DNA mismatch repair protein MutS from Shewanella pealeana (strain ATCC 700345 / ANG-SQ1).